A 328-amino-acid chain; its full sequence is H-2 class I histocompatibility antigen, K-Q alpha chain (328 aa).

Residues 1 to 71 (PRFISVGYVD…LLRYYNQSAG (71 aa)) are alpha-1. Residues 1-265 (PRFISVGYVD…EPPPSAVSNT (265 aa)) are Extracellular-facing. Residue Asn67 is glycosylated (N-linked (GlcNAc...) asparagine). The interval 72-163 (GSHTIQRMYG…KNGNATLLRT (92 aa)) is alpha-2. Cys82 and Cys145 form a disulfide bridge. N-linked (GlcNAc...) asparagine glycosylation occurs at Asn157. The interval 164 to 255 (DSPKAHVTHH…GLPKPLTLRW (92 aa)) is alpha-3. The region spanning 166–252 (PKAHVTHHSR…YHQGLPKPLT (87 aa)) is the Ig-like C1-type domain. Residues Cys184 and Cys240 are joined by a disulfide bond. The connecting peptide stretch occupies residues 256 to 265 (EPPPSAVSNT). Residues 266–289 (VIIAVLVVLGAAIVTGAVVAFVMM) form a helical membrane-spanning segment. At 290–328 (RRRNTGGKGGDYALAPGSQTSDLSLPDCKVMVHDPHSLA) the chain is on the cytoplasmic side. Residues Ser310 and Ser313 each carry the phosphoserine modification.

Belongs to the MHC class I family. Heterodimer of an alpha chain and a beta chain (beta-2-microglobulin).

It localises to the membrane. Its function is as follows. Involved in the presentation of foreign antigens to the immune system. The chain is H-2 class I histocompatibility antigen, K-Q alpha chain (H2-K1) from Mus musculus (Mouse).